Consider the following 293-residue polypeptide: Energy-coupling factor transporter ATP-binding protein EcfA2 (293 aa).

The ABC transporter domain maps to 3–246; the sequence is ITFQKVEHRY…ADELEKIGVD (244 aa). An ATP-binding site is contributed by 40–47; sequence GHTGSGKS.

Belongs to the ABC transporter superfamily. Energy-coupling factor EcfA family. As to quaternary structure, forms a stable energy-coupling factor (ECF) transporter complex composed of 2 membrane-embedded substrate-binding proteins (S component), 2 ATP-binding proteins (A component) and 2 transmembrane proteins (T component).

It is found in the cell membrane. ATP-binding (A) component of a common energy-coupling factor (ECF) ABC-transporter complex. Unlike classic ABC transporters this ECF transporter provides the energy necessary to transport a number of different substrates. The chain is Energy-coupling factor transporter ATP-binding protein EcfA2 from Bacillus cereus (strain ATCC 10987 / NRS 248).